A 374-amino-acid chain; its full sequence is Cobalt-precorrin-5B C(1)-methyltransferase (374 aa).

This sequence belongs to the CbiD family.

It catalyses the reaction Co-precorrin-5B + S-adenosyl-L-methionine = Co-precorrin-6A + S-adenosyl-L-homocysteine. It participates in cofactor biosynthesis; adenosylcobalamin biosynthesis; cob(II)yrinate a,c-diamide from sirohydrochlorin (anaerobic route): step 6/10. Its function is as follows. Catalyzes the methylation of C-1 in cobalt-precorrin-5B to form cobalt-precorrin-6A. This Synechococcus elongatus (strain ATCC 33912 / PCC 7942 / FACHB-805) (Anacystis nidulans R2) protein is Cobalt-precorrin-5B C(1)-methyltransferase.